Here is a 105-residue protein sequence, read N- to C-terminus: Met repressor (105 aa).

Belongs to the MetJ family. As to quaternary structure, homodimer.

It is found in the cytoplasm. Its function is as follows. This regulatory protein, when combined with SAM (S-adenosylmethionine) represses the expression of the methionine regulon and of enzymes involved in SAM synthesis. The polypeptide is Met repressor (Haemophilus influenzae (strain 86-028NP)).